We begin with the raw amino-acid sequence, 369 residues long: Molybdenum import ATP-binding protein ModC (369 aa).

The 237-residue stretch at proline 7–aspartate 243 folds into the ABC transporter domain. An ATP-binding site is contributed by glycine 41 to threonine 48. The Mop domain occupies glutamate 304 to alanine 369.

It belongs to the ABC transporter superfamily. Molybdate importer (TC 3.A.1.8) family. In terms of assembly, the complex is composed of two ATP-binding proteins (ModC), two transmembrane proteins (ModB) and a solute-binding protein (ModA).

The protein localises to the cell inner membrane. It catalyses the reaction molybdate(out) + ATP + H2O = molybdate(in) + ADP + phosphate + H(+). Its function is as follows. Part of the ABC transporter complex ModABC involved in molybdenum import. Responsible for energy coupling to the transport system. This Bordetella pertussis (strain Tohama I / ATCC BAA-589 / NCTC 13251) protein is Molybdenum import ATP-binding protein ModC.